The primary structure comprises 370 residues: Elongation factor Ts, mitochondrial (370 aa).

The transit peptide at 1–29 directs the protein to the mitochondrion; sequence MALLSAAPRALRLPRRLPLGAALPALRAL.

Belongs to the EF-Ts family.

It is found in the mitochondrion. Functionally, associates with the EF-Tu.GDP complex and induces the exchange of GDP to GTP. It remains bound to the aminoacyl-tRNA.EF-Tu.GTP complex up to the GTP hydrolysis stage on the ribosome. The polypeptide is Elongation factor Ts, mitochondrial (Cryptococcus neoformans var. neoformans serotype D (strain B-3501A) (Filobasidiella neoformans)).